Here is a 2437-residue protein sequence, read N- to C-terminus: Neurogenic locus notch homolog protein 1 (2437 aa).

An N-terminal signal peptide occupies residues 1 to 20 (MNRFLVKLTLLTAASLATVA). EGF-like domains lie at 21–57 (QGQRCSEYCQNGGICEYKPSGEASCRCPADFVGAQCQ), 58–98 (FPNP…RLCL), 101–138 (VNHACMNSPCRNGGTCSLLTLDTFTCRCQPGWSGKTCQ), and 139–175 (LADPCASNPCANGGQCSAFESHYICTCPPNFHGQTCR). Residues 21–1726 (QGQRCSEYCQ…GGPPKTGEMY (1706 aa)) are Extracellular-facing. 111 disulfides stabilise this stretch: cysteine 25–cysteine 35, cysteine 29–cysteine 45, cysteine 47–cysteine 56, cysteine 62–cysteine 73, cysteine 67–cysteine 86, cysteine 88–cysteine 97, cysteine 105–cysteine 116, cysteine 110–cysteine 126, cysteine 128–cysteine 137, cysteine 143–cysteine 154, cysteine 148–cysteine 163, cysteine 165–cysteine 174, cysteine 181–cysteine 194, cysteine 188–cysteine 203, cysteine 205–cysteine 214, cysteine 221–cysteine 232, cysteine 226–cysteine 242, cysteine 244–cysteine 253, cysteine 260–cysteine 271, cysteine 265–cysteine 280, cysteine 282–cysteine 291, cysteine 298–cysteine 311, cysteine 305–cysteine 320, cysteine 322–cysteine 331, cysteine 338–cysteine 349, cysteine 343–cysteine 358, cysteine 360–cysteine 369, cysteine 375–cysteine 386, cysteine 380–cysteine 397, cysteine 399–cysteine 408, cysteine 415–cysteine 428, cysteine 422–cysteine 437, cysteine 439–cysteine 448, cysteine 455–cysteine 466, cysteine 460–cysteine 475, cysteine 477–cysteine 486, cysteine 493–cysteine 503, cysteine 498–cysteine 512, cysteine 514–cysteine 523, cysteine 530–cysteine 541, cysteine 535–cysteine 550, cysteine 552–cysteine 561, cysteine 568–cysteine 578, cysteine 573–cysteine 587, cysteine 589–cysteine 598, cysteine 605–cysteine 616, cysteine 610–cysteine 625, cysteine 627–cysteine 636, cysteine 643–cysteine 653, cysteine 648–cysteine 662, cysteine 664–cysteine 673, cysteine 680–cysteine 691, cysteine 685–cysteine 700, cysteine 702–cysteine 711, cysteine 718–cysteine 728, cysteine 723–cysteine 737, cysteine 739–cysteine 748, cysteine 755–cysteine 766, cysteine 760–cysteine 775, cysteine 777–cysteine 786, cysteine 793–cysteine 804, cysteine 798–cysteine 813, cysteine 815–cysteine 824, cysteine 831–cysteine 842, cysteine 836–cysteine 853, cysteine 855–cysteine 864, cysteine 871–cysteine 882, cysteine 876–cysteine 891, cysteine 893–cysteine 902, cysteine 909–cysteine 920, cysteine 914–cysteine 929, cysteine 931–cysteine 940, cysteine 947–cysteine 958, cysteine 952–cysteine 967, cysteine 969–cysteine 978, cysteine 985–cysteine 996, cysteine 990–cysteine 1005, cysteine 1007–cysteine 1016, cysteine 1023–cysteine 1034, cysteine 1028–cysteine 1043, cysteine 1045–cysteine 1054, cysteine 1061–cysteine 1072, cysteine 1066–cysteine 1081, cysteine 1083–cysteine 1092, cysteine 1099–cysteine 1120, cysteine 1114–cysteine 1129, cysteine 1131–cysteine 1140, cysteine 1147–cysteine 1158, cysteine 1152–cysteine 1167, cysteine 1169–cysteine 1178, cysteine 1185–cysteine 1196, cysteine 1190–cysteine 1205, cysteine 1207–cysteine 1216, cysteine 1223–cysteine 1242, cysteine 1236–cysteine 1251, cysteine 1253–cysteine 1262, cysteine 1269–cysteine 1282, cysteine 1274–cysteine 1291, cysteine 1293–cysteine 1302, cysteine 1309–cysteine 1320, cysteine 1314–cysteine 1332, cysteine 1334–cysteine 1343, cysteine 1350–cysteine 1361, cysteine 1355–cysteine 1370, cysteine 1372–cysteine 1381, cysteine 1389–cysteine 1400, cysteine 1394–cysteine 1411, cysteine 1413–cysteine 1422, cysteine 1447–cysteine 1470, cysteine 1452–cysteine 1465, and cysteine 1461–cysteine 1477. The EGF-like 5; calcium-binding domain maps to 177–215 (DVNECAVSPSPCRNGGTCINEVGSYLCRCPPEYTGPHCQ). One can recognise an EGF-like 6 domain in the interval 217 to 254 (LYQPCLPSPCRSGGTCVQTSDTTHTCSCLPGFTGQTCE). Residue threonine 231 is glycosylated (O-linked (Fuc...) threonine; alternate). A glycan (O-linked (GalNAc...) threonine; alternate) is linked at threonine 231. Residues 256–292 (NVDDCTQHACENGGPCIDGINTYNCHCDKHWTGQYCT) enclose the EGF-like 7; calcium-binding domain. Residues 294-332 (DVDECELSPNACQNGGTCHNTIGGFHCVCVNGWTGDDCS) form the EGF-like 8; calcium-binding domain. The region spanning 334-370 (NIDDCASAACSHGATCHDRVASFFCECPHGRTGLLCH) is the EGF-like 9; calcium-binding domain. The EGF-like 10 domain maps to 371-409 (LDDACISNPCQKGSNCDTNPVSGKAICTCPPGYTGSACN). The EGF-like 11; calcium-binding domain maps to 411 to 449 (DIDECSLGANPCEHGGRCLNTKGSFQCKCLQGYEGPRCE). The 37-residue stretch at 451 to 487 (DVNECKSNPCQNDATCLDQIGGFHCICMPGYEGVFCQ) folds into the EGF-like 12; calcium-binding domain. The EGF-like 13; calcium-binding domain occupies 489–524 (NSDDCASQPCLNGKCIDKINSFHCECPKGFSGSLCQ). The region spanning 526-562 (DVDECASTPCKNGAKCTDGPNKYTCECTPGFSGIHCE) is the EGF-like 14; calcium-binding domain. The EGF-like 15; calcium-binding domain maps to 564 to 599 (DINECASSPCHYGVCRDGVASFTCDCRPGYTGRLCE). Residues 601–637 (NINECLSQPCRNGGTCQDRENAYICTCPKGTTGVNCE) enclose the EGF-like 16; calcium-binding domain. One can recognise an EGF-like 17; calcium-binding domain in the interval 639–674 (NIDDCKRKPCDYGKCIDKINGYECVCEPGYSGSMCN). The EGF-like 18; calcium-binding domain occupies 676-712 (NIDDCALNPCHNGGTCIDGVNSFTCLCPDGFRDATCL). Residues 714–749 (QHNECSSNPCIHGSCLDQINSYRCVCEAGWMGRNCD) form the EGF-like 19; calcium-binding domain. An EGF-like 20; calcium-binding domain is found at 751–787 (NINECLSNPCVNGGTCKDMTSGYLCTCRAGFSGPNCQ). Residues 789–825 (NINECASNPCLNQGSCIDDVAGFKCNCMLPYTGEVCE) form the EGF-like 21; calcium-binding domain. Residues 827–865 (VLAPCSPRPCKNGGVCRESEDFQSFSCNCPAGWQGQTCE) form the EGF-like 22 domain. The region spanning 867–903 (DINECVRNPCTNGGVCENLRGGFQCRCNPGFTGALCE) is the EGF-like 23; calcium-binding domain. Residues 905–941 (DIDDCEPNPCSNGGVCQDRVNGFVCVCLAGFRGERCA) enclose the EGF-like 24; calcium-binding domain. The EGF-like 25; calcium-binding domain occupies 943–979 (DIDECVSAPCRNGGNCTDCVNSYTCSCPAGFSGINCE). Asparagine 957 is a glycosylation site (N-linked (GlcNAc...) asparagine). The 37-residue stretch at 981 to 1017 (NTPDCTESSCFNGGTCVDGISSFSCVCLPGFTGNYCQ) folds into the EGF-like 26 domain. The EGF-like 27; calcium-binding domain maps to 1019 to 1055 (DVNECDSRPCQNGGSCQDGYGTYKCTCPHGYTGLNCQ). EGF-like domains lie at 1057–1093 (LVRWCDSSPCKNGGSCWQQGASFTCQCASGWTGIYCD) and 1095–1141 (PSVS…SYCQ). In terms of domain architecture, EGF-like 30; calcium-binding spans 1143–1179 (QVDECQPNPCQNGATCTDYLGGYSCECVPGYHGMNCS). A glycan (N-linked (GlcNAc...) asparagine) is linked at asparagine 1177. One can recognise an EGF-like 31; calcium-binding domain in the interval 1181–1217 (EINECLSQPCQNGGTCIDLVNTYKCSCPRGTQGVHCE). An EGF-like 32; calcium-binding domain is found at 1219-1263 (DIDDCSPSVDPLTGEPRCFNGGRCVDRVGGYGCVCPAGFVGERCE). EGF-like domains follow at residues 1265–1303 (DVNECLSDPCDPSGSYNCVQLINDFRCECRTGYTGKRCE), 1305–1344 (VFNGCKDTPCKNGGTCAVASNTKHGYICKCQPGYSGSSCE), 1346–1382 (DSQSCGSLRCRNGATCVSGHLSPRCLCAPGFSGHECQ), and 1385–1423 (MDSPCLVNPCYNGGTCQPISDAPFYRCSCPANFNGLLCH). Residue threonine 1399 is glycosylated (O-linked (Fuc...) threonine; alternate). O-linked (GalNAc...) threonine; alternate glycosylation occurs at threonine 1399. LNR repeat units lie at residues 1447-1487 (CEIA…PWQN), 1488-1525 (CSAALQCWRYFNDGKCDEQCATAGCLYDGFDCQRLEGQ), and 1526-1566 (CNPL…VPQK). An N-linked (GlcNAc...) asparagine glycan is attached at asparagine 1487. 6 disulfide bridges follow: cysteine 1488-cysteine 1512, cysteine 1494-cysteine 1507, cysteine 1503-cysteine 1519, cysteine 1526-cysteine 1552, cysteine 1534-cysteine 1547, and cysteine 1543-cysteine 1559. Asparagine 1585 is a glycosylation site (N-linked (GlcNAc...) asparagine). A helical transmembrane segment spans residues 1727–1747 (PMFLVLLALAVLALAAVGVVV). Over 1748-2437 (SRKRKREHGQ…QMNHIPEAFK (690 aa)) the chain is Cytoplasmic. Residues 1770–1790 (KKKRREPVGEDSVGLKPLKNS) are disordered. ANK repeat units follow at residues 1867 to 1910 (DGFT…NLHN), 1915 to 1944 (TGETALHLAARYARSDAAKRLLESCADANV), 1948 to 1978 (MGRTPLHAAVAADAQGVFQILIRNRATDLDA), 1982 to 2011 (DGTTPLILATRLAVEGMVEELINCHADPNA), 2015 to 2044 (SGKSALHWAAAVNNVDAAVVLLKNGANKDL), and 2048 to 2077 (KEETPLFLAAREGSYETAKVLLDHLANRDI). Disordered regions lie at residues 2127–2174 (IKPS…GGIM) and 2356–2437 (RMAP…EAFK). The segment covering 2356 to 2387 (RMAPPISSTQFLTPPSQHSYSNPMDNTPNHQQ) has biased composition (polar residues). Low complexity predominate over residues 2396 to 2411 (PSAGSPDQWSSSSPHS). Residues 2412-2429 (NLSDWSEGISSPPTSMQM) are compositionally biased toward polar residues.

It belongs to the NOTCH family. Synthesized in the endoplasmic reticulum as an inactive form which is proteolytically cleaved by a furin-like convertase in the trans-Golgi network before it reaches the plasma membrane to yield an active, ligand-accessible form. Cleavage results in a C-terminal fragment N(TM) and a N-terminal fragment N(EC). Following ligand binding, it is cleaved by adam17 to yield a membrane-associated intermediate fragment called notch extracellular truncation (NEXT). Following endocytosis, this fragment is then cleaved by presenilin dependent gamma-secretase to release a Notch-derived peptide containing the intracellular domain (NICD) from the membrane. In terms of processing, O-glycosylated on the EGF-like domains. Contains both O-linked fucose and O-linked glucose. O-linked glycosylation by galnt11 is involved in determination of left/right symmetry: glycosylation promotes activation of notch1, possibly by promoting cleavage by adam17, modulating the balance between motile and immotile (sensory) cilia at the left-right organiser (LRO).

It localises to the cell membrane. It is found in the nucleus. In terms of biological role, functions as a receptor for membrane-bound ligands Jagged-1 (JAG1), Jagged-2 (JAG2) and Delta-1 (DLL1) to regulate cell-fate determination. Upon ligand activation through the released notch intracellular domain (NICD) it forms a transcriptional activator complex with RBPJ/RBPSUH and activates genes of the enhancer of split locus. Affects the implementation of differentiation, proliferation and apoptotic programs. Involved in angiogenesis; negatively regulates endothelial cell proliferation and migration and angiogenic sprouting. Involved in the maturation of both CD4(+) and CD8(+) cells in the thymus. Important for follicular differentiation and possibly cell fate selection within the follicle. During cerebellar development, functions as a receptor for neuronal DNER and is involved in the differentiation of Bergmann glia. Represses neuronal and myogenic differentiation. May play an essential role in postimplantation development, probably in some aspect of cell specification and/or differentiation. May be involved in mesoderm development, somite formation and neurogenesis. Involved in determination of left/right symmetry by modulating the balance between motile and immotile (sensory) cilia at the left-right organiser (LRO). The protein is Neurogenic locus notch homolog protein 1 (notch1a) of Danio rerio (Zebrafish).